Consider the following 122-residue polypeptide: Phycocyanin PC645 alpha-2 subunit (122 aa).

(2R,3E)-phycocyanobilin is bound by residues D54 and R68. The mesobiliverdin site is built by C70, K76, E77, and C92.

This sequence belongs to the phycoerythrin family. As to quaternary structure, heterotetramer of 2 different alpha chains and 2 identical beta chains which form 2 alpha-beta heterodimers within the heterotetramer. In terms of processing, contains two phycocyanobilin chromophores and one mesobiliverdin chromophore with binding mediated by both the alpha and beta subunits.

It is found in the plastid. It localises to the chloroplast thylakoid membrane. In terms of biological role, light-harvesting photosynthetic tetrapyrrole chromophore-protein from the phycobiliprotein complex. The protein is Phycocyanin PC645 alpha-2 subunit of Chroomonas sp. (strain CCMP270).